We begin with the raw amino-acid sequence, 113 residues long: U11-theraphotoxin-Hhn1a (113 aa).

An N-terminal signal peptide occupies residues 1 to 21; it reads MNTVRVTFLLVFVLAVSLGQA. The propeptide occupies 22–74; it reads DKDENRMEMQEKTEQGRSYLDFAENLLLQKLEELEAKLLEEDSEESRNSRQKR. The tract at residues 61-83 is disordered; that stretch reads EEDSEESRNSRQKRCIGEGVPCD. 3 disulfide bridges follow: Cys75–Cys90, Cys82–Cys95, and Cys89–Cys110.

This sequence belongs to the neurotoxin 14 (magi-1) family. 01 (HNTX-16) subfamily. In terms of tissue distribution, expressed by the venom gland.

It localises to the secreted. Its function is as follows. Probable ion channel inhibitor. The protein is U11-theraphotoxin-Hhn1a of Cyriopagopus hainanus (Chinese bird spider).